The primary structure comprises 394 residues: Ornithine aminotransferase 1 (394 aa).

K252 carries the N6-(pyridoxal phosphate)lysine modification.

This sequence belongs to the class-III pyridoxal-phosphate-dependent aminotransferase family. OAT subfamily. Pyridoxal 5'-phosphate serves as cofactor.

The protein localises to the cytoplasm. It catalyses the reaction a 2-oxocarboxylate + L-ornithine = L-glutamate 5-semialdehyde + an L-alpha-amino acid. It functions in the pathway amino-acid biosynthesis; L-proline biosynthesis; L-glutamate 5-semialdehyde from L-ornithine: step 1/1. Catalyzes the interconversion of ornithine to glutamate semialdehyde. The sequence is that of Ornithine aminotransferase 1 from Staphylococcus aureus (strain MRSA252).